The sequence spans 186 residues: Ribosome-recycling factor (186 aa).

Belongs to the RRF family.

The protein resides in the cytoplasm. In terms of biological role, responsible for the release of ribosomes from messenger RNA at the termination of protein biosynthesis. May increase the efficiency of translation by recycling ribosomes from one round of translation to another. The protein is Ribosome-recycling factor of Ralstonia pickettii (strain 12J).